Here is a 291-residue protein sequence, read N- to C-terminus: 33 kDa chaperonin (291 aa).

Cystine bridges form between Cys237-Cys239 and Cys270-Cys273.

The protein belongs to the HSP33 family. In terms of processing, under oxidizing conditions two disulfide bonds are formed involving the reactive cysteines. Under reducing conditions zinc is bound to the reactive cysteines and the protein is inactive.

The protein resides in the cytoplasm. Its function is as follows. Redox regulated molecular chaperone. Protects both thermally unfolding and oxidatively damaged proteins from irreversible aggregation. Plays an important role in the bacterial defense system toward oxidative stress. This Bacillus cereus (strain G9842) protein is 33 kDa chaperonin.